The primary structure comprises 259 residues: UPF0246 protein NMCC_0856 (259 aa).

Belongs to the UPF0246 family.

The chain is UPF0246 protein NMCC_0856 from Neisseria meningitidis serogroup C (strain 053442).